Here is an 848-residue protein sequence, read N- to C-terminus: ATP-dependent Clp protease ATP-binding subunit ClpC1 (848 aa).

Positions 2–144 (FERFTDRARR…RQQVIQLLSG (143 aa)) constitute a Clp R domain. 2 repeat regions span residues 5-70 (FTDR…IGQG) and 80-144 (FTPR…LLSG). In terms of domain architecture, UVR spans 425 to 460 (DEKIADARREKESAIDAQDFEKAAALRDKEKQLVAQ). Residues 553 to 560 (GPSGVGKT) and 617 to 626 (KPFSVVLFDE) each bind ATP. Residues 811 to 848 (GQGEDAKFTFSGGPKRAETAEPDLAGAGAAGAPTAGTE) form a disordered region. Residues 835-848 (AGAGAAGAPTAGTE) show a composition bias toward low complexity.

The protein belongs to the ClpA/ClpB family. ClpC subfamily.

In terms of biological role, ATP-dependent specificity component of the Clp protease. It directs the protease to specific substrates. Can perform chaperone functions in the absence of ClpP. Degrades anti-sigma-E factor RseA in the presence of ClpP2. In Mycolicibacterium smegmatis (strain ATCC 700084 / mc(2)155) (Mycobacterium smegmatis), this protein is ATP-dependent Clp protease ATP-binding subunit ClpC1 (clpC1).